The chain runs to 1024 residues: NLR family CARD domain-containing protein 4 (1024 aa).

One can recognise a CARD domain in the interval 1–88 (MNFIRNNRRA…FVYQDLTGQN (88 aa)). The nucleotide-binding domain (NBD) stretch occupies residues 95–298 (EEDLNVLAQN…HVGALTAEVG (204 aa)). ATP is bound by residues threonine 135, 172 to 177 (GKGKST), and histidine 443. An NACHT domain is found at 163-476 (SPCLIEGESG…VSKGNSYLNK (314 aa)). The interval 356–463 (AHTQTMLFQT…RLSSLLTSKE (108 aa)) is winged-helix domain (WHD). A Phosphoserine modification is found at serine 533. LRR repeat units follow at residues 578–598 (FFQG…LFDF), 656–679 (KQEF…DIKY), 735–758 (VTGL…LIDS), 762–785 (LKNL…NLAE), 787–812 (LRSL…DYIV), 824–847 (EMKL…LHNL), 848–870 (IKLS…ALQE), 878–902 (LGEL…LLKQ), 911–933 (KLGL…FLEM), 936–963 (LRDL…VFEN), 965–985 (KQLV…ALVR), and 999–1021 (EVKL…TFKL).

As to quaternary structure, homooligomer; homooligomerizes following activation of Naip proteins by pathogenic proteins such as S.typhimurium (Salmonella) flagellin or PrgJ. Component of the NLRC4 inflammasome, at least composed of NLRC4, caspase-1 (CASP1) and some NAIP protein (Naip, Naip2 or Naip5). Interacts with Naip5 and Naip6; following Naip5 and Naip6 engagement by Salmonella flagellin. Interacts with Naip2; following Naip2 engagement by Salmonella PrgJ. The inflammasome is a huge complex that contains multiple copies of NLRC4 and a single Naip protein chain. Some NLRC4 inflammasomes contain PYCARD/ASC, while some others directly contact and activate CASP1. Interacts with EIF2AK2/PKR. Phosphorylated at Ser-533 following infection of macrophages with S.typhimurium (Salmonella). Phosphorylation is essential for NLRC4 inflammasome function to promote caspase-1 activation and pyroptosis. PRKCD phosphorylates Ser-533 in vitro. As to expression, expressed by intestinal mononuclear phagocytes.

It localises to the cytoplasm. The protein resides in the cytosol. It is found in the inflammasome. Key component of inflammasomes that indirectly senses specific proteins from pathogenic bacteria and fungi and responds by assembling an inflammasome complex that promotes caspase-1 activation, cytokine production and macrophage pyroptosis. The NLRC4 inflammasome is activated as part of the innate immune response to a range of intracellular bacteria. It senses pathogenic proteins of the type III secretion system (T3SS) and type IV secretion system (T4SS) such as flagellin and PrgJ-like rod proteins via the Naip proteins (Naip1, Naip2 or Naip5): specific Naip proteins recognize and bind pathogenic proteins, driving assembly and activation of the NLRC4 inflammasome. The NLRC4 inflammasome senses Gram-negative bacteria such as L.pneumophila and P.aeruginosa, enteric pathogens S.typhimurium (Salmonella) and S.flexneri and fungal pathogen C.albicans. In intestine, the NLRC4 inflammasome is able to discriminate between commensal and pathogenic bacteria and specifically drives production of interleukin-1 beta (IL1B) in response to infection by Salmonella or P.aeruginosa. In case of L.pneumophila infection the inflammasome acts by activating caspase-7. The polypeptide is NLR family CARD domain-containing protein 4 (Nlrc4) (Mus musculus (Mouse)).